We begin with the raw amino-acid sequence, 328 residues long: DNA-directed RNA polymerase subunit alpha (328 aa).

The interval 1-231 (MIQQMQMPEK…DHVRLFSLFS (231 aa)) is alpha N-terminal domain (alpha-NTD). The segment at 252–328 (MRKLLMTRIE…MEVTKYRLNQ (77 aa)) is alpha C-terminal domain (alpha-CTD).

Belongs to the RNA polymerase alpha chain family. Homodimer. The RNAP catalytic core consists of 2 alpha, 1 beta, 1 beta' and 1 omega subunit. When a sigma factor is associated with the core the holoenzyme is formed, which can initiate transcription.

It catalyses the reaction RNA(n) + a ribonucleoside 5'-triphosphate = RNA(n+1) + diphosphate. Functionally, DNA-dependent RNA polymerase catalyzes the transcription of DNA into RNA using the four ribonucleoside triphosphates as substrates. This Chloroherpeton thalassium (strain ATCC 35110 / GB-78) protein is DNA-directed RNA polymerase subunit alpha.